We begin with the raw amino-acid sequence, 216 residues long: ATP-dependent dethiobiotin synthetase BioD (216 aa).

Position 12 to 17 (Asn12 to Phe17) interacts with ATP. Position 16 (Thr16) interacts with Mg(2+). Lys36 is a catalytic residue. A substrate-binding site is contributed by Ser40. ATP is bound by residues Asp53, Glu110–Gly113, and Asn170–Gln171. Residues Asp53 and Glu110 each coordinate Mg(2+).

Belongs to the dethiobiotin synthetase family. Homodimer. The cofactor is Mg(2+).

It is found in the cytoplasm. The enzyme catalyses (7R,8S)-7,8-diammoniononanoate + CO2 + ATP = (4R,5S)-dethiobiotin + ADP + phosphate + 3 H(+). It functions in the pathway cofactor biosynthesis; biotin biosynthesis; biotin from 7,8-diaminononanoate: step 1/2. Catalyzes a mechanistically unusual reaction, the ATP-dependent insertion of CO2 between the N7 and N8 nitrogen atoms of 7,8-diaminopelargonic acid (DAPA, also called 7,8-diammoniononanoate) to form a ureido ring. This Vesicomyosocius okutanii subsp. Calyptogena okutanii (strain HA) protein is ATP-dependent dethiobiotin synthetase BioD.